Reading from the N-terminus, the 84-residue chain is Small ribosomal subunit protein bS18A (84 aa).

This sequence belongs to the bacterial ribosomal protein bS18 family. Part of the 30S ribosomal subunit. Forms a tight heterodimer with protein bS6.

Functionally, binds as a heterodimer with protein bS6 to the central domain of the 16S rRNA, where it helps stabilize the platform of the 30S subunit. The polypeptide is Small ribosomal subunit protein bS18A (Mycobacterium marinum (strain ATCC BAA-535 / M)).